The primary structure comprises 377 residues: 4-hydroxy-3-methylbut-2-en-1-yl diphosphate synthase (flavodoxin) (377 aa).

[4Fe-4S] cluster is bound by residues cysteine 275, cysteine 278, cysteine 310, and glutamate 317.

Belongs to the IspG family. Requires [4Fe-4S] cluster as cofactor.

It catalyses the reaction (2E)-4-hydroxy-3-methylbut-2-enyl diphosphate + oxidized [flavodoxin] + H2O + 2 H(+) = 2-C-methyl-D-erythritol 2,4-cyclic diphosphate + reduced [flavodoxin]. Its pathway is isoprenoid biosynthesis; isopentenyl diphosphate biosynthesis via DXP pathway; isopentenyl diphosphate from 1-deoxy-D-xylulose 5-phosphate: step 5/6. Converts 2C-methyl-D-erythritol 2,4-cyclodiphosphate (ME-2,4cPP) into 1-hydroxy-2-methyl-2-(E)-butenyl 4-diphosphate. This chain is 4-hydroxy-3-methylbut-2-en-1-yl diphosphate synthase (flavodoxin), found in Jannaschia sp. (strain CCS1).